The primary structure comprises 220 residues: UPF0319 protein YccT (220 aa).

A signal peptide spans 1-20 (MKTGALATFLALCLPVTVFA).

Belongs to the UPF0319 family.

The protein is UPF0319 protein YccT of Salmonella enteritidis PT4 (strain P125109).